Reading from the N-terminus, the 397-residue chain is Digeranylgeranylglycerophospholipid reductase 3 (397 aa).

The FAD site is built by Ala-16, Asp-35, Cys-46, Ala-47, Gly-49, Arg-102, Ala-126, Asp-283, Gly-295, and Ile-296. Position 338 (Lys-338) interacts with a 2,3-bis-O-(geranylgeranyl)-sn-glycerol 1-phospholipid.

The protein belongs to the geranylgeranyl reductase family. DGGGPL reductase subfamily. The cofactor is FAD.

The enzyme catalyses a 2,3-bis-O-phytanyl-sn-glycerol 1-phospholipid + 8 A = a 2,3-bis-O-(geranylgeranyl)-sn-glycerol 1-phospholipid + 8 AH2. The catalysed reaction is 2,3-bis-O-(phytanyl)-sn-glycerol 1-phosphate + 8 A = 2,3-bis-O-(geranylgeranyl)-sn-glycerol 1-phosphate + 8 AH2. It catalyses the reaction CDP-2,3-bis-O-(geranylgeranyl)-sn-glycerol + 8 AH2 = CDP-2,3-bis-O-(phytanyl)-sn-glycerol + 8 A. It carries out the reaction archaetidylserine + 8 AH2 = 2,3-bis-O-phytanyl-sn-glycero-3-phospho-L-serine + 8 A. It participates in membrane lipid metabolism; glycerophospholipid metabolism. Its function is as follows. Is involved in the reduction of 2,3-digeranylgeranylglycerophospholipids (unsaturated archaeols) into 2,3-diphytanylglycerophospholipids (saturated archaeols) in the biosynthesis of archaeal membrane lipids. Catalyzes the formation of archaetidic acid (2,3-di-O-phytanyl-sn-glyceryl phosphate) from 2,3-di-O-geranylgeranylglyceryl phosphate (DGGGP) via the hydrogenation of each double bond of the isoprenoid chains. Is also probably able to reduce double bonds of geranyl groups in CDP-2,3-bis-O-(geranylgeranyl)-sn-glycerol and archaetidylserine, thus acting at various stages in the biosynthesis of archaeal membrane lipids. In Methanosphaera stadtmanae (strain ATCC 43021 / DSM 3091 / JCM 11832 / MCB-3), this protein is Digeranylgeranylglycerophospholipid reductase 3.